The primary structure comprises 302 residues: Phosphoribosylaminoimidazole-succinocarboxamide synthase (302 aa).

This sequence belongs to the SAICAR synthetase family.

It catalyses the reaction 5-amino-1-(5-phospho-D-ribosyl)imidazole-4-carboxylate + L-aspartate + ATP = (2S)-2-[5-amino-1-(5-phospho-beta-D-ribosyl)imidazole-4-carboxamido]succinate + ADP + phosphate + 2 H(+). The protein operates within purine metabolism; IMP biosynthesis via de novo pathway; 5-amino-1-(5-phospho-D-ribosyl)imidazole-4-carboxamide from 5-amino-1-(5-phospho-D-ribosyl)imidazole-4-carboxylate: step 1/2. The polypeptide is Phosphoribosylaminoimidazole-succinocarboxamide synthase (Leptothrix cholodnii (strain ATCC 51168 / LMG 8142 / SP-6) (Leptothrix discophora (strain SP-6))).